Here is a 346-residue protein sequence, read N- to C-terminus: uncharacterized protein (346 aa).

This is an uncharacterized protein from Mycoplasma pneumoniae (strain ATCC 29342 / M129 / Subtype 1) (Mycoplasmoides pneumoniae).